Here is a 389-residue protein sequence, read N- to C-terminus: Succinate--CoA ligase [ADP-forming] subunit beta (389 aa).

Residues 9 to 236 (RDMFEAHGVP…KDAADPLEAK (228 aa)) form the ATP-grasp domain. ATP-binding positions include Lys45, 52-54 (GRG), Ala94, and Glu99. Residues Asn191 and Asp205 each coordinate Mg(2+). Substrate-binding positions include Asn256 and 318–320 (GIT).

The protein belongs to the succinate/malate CoA ligase beta subunit family. As to quaternary structure, heterotetramer of two alpha and two beta subunits. The cofactor is Mg(2+).

It carries out the reaction succinate + ATP + CoA = succinyl-CoA + ADP + phosphate. It catalyses the reaction GTP + succinate + CoA = succinyl-CoA + GDP + phosphate. The protein operates within carbohydrate metabolism; tricarboxylic acid cycle; succinate from succinyl-CoA (ligase route): step 1/1. In terms of biological role, succinyl-CoA synthetase functions in the citric acid cycle (TCA), coupling the hydrolysis of succinyl-CoA to the synthesis of either ATP or GTP and thus represents the only step of substrate-level phosphorylation in the TCA. The beta subunit provides nucleotide specificity of the enzyme and binds the substrate succinate, while the binding sites for coenzyme A and phosphate are found in the alpha subunit. This is Succinate--CoA ligase [ADP-forming] subunit beta from Arthrobacter sp. (strain FB24).